The sequence spans 397 residues: Elongation factor Tu (397 aa).

Residues 10–206 form the tr-type G domain; that stretch reads KPHVNIGTIG…EVDAYIPTPE (197 aa). The segment at 19–26 is G1; it reads GHVDHGKT. Position 19–26 (19–26) interacts with GTP; the sequence is GHVDHGKT. Residue Thr-26 participates in Mg(2+) binding. Positions 60–64 are G2; sequence GITIN. The tract at residues 81–84 is G3; sequence DCPG. GTP contacts are provided by residues 81-85 and 136-139; these read DCPGH and NKAD. The interval 136 to 139 is G4; the sequence is NKAD. The tract at residues 174-176 is G5; sequence SAL.

It belongs to the TRAFAC class translation factor GTPase superfamily. Classic translation factor GTPase family. EF-Tu/EF-1A subfamily. Monomer.

It localises to the cytoplasm. The catalysed reaction is GTP + H2O = GDP + phosphate + H(+). Its function is as follows. GTP hydrolase that promotes the GTP-dependent binding of aminoacyl-tRNA to the A-site of ribosomes during protein biosynthesis. The sequence is that of Elongation factor Tu from Clostridium acetobutylicum (strain ATCC 824 / DSM 792 / JCM 1419 / IAM 19013 / LMG 5710 / NBRC 13948 / NRRL B-527 / VKM B-1787 / 2291 / W).